Consider the following 1538-residue polypeptide: MATDGGPLAASSASLDSSLSPLHASPSPSSTYTASSLALSAPAIAASFSVASTFSNSLIPPPPLPPPTPSTMAGWFGWVFSFFFQVIPSVLYWVITFATITLPTWLFTLFSMSLTFTMNFTTLLLIALAIVSTISWFIRYRFLNMYSRLPSEPQRKEPHLDLFPDVQEGDSKPGLANYLDEFLSAIKVFGYLERPVFHELTRTMQTRKLIAGETLMLEEEKGFCLVVDGLVQIFVKSMRDGKPNVDEGSNHMGAESSDEDDHRVDGKQGYQLLTEVKNGASMSSLFSILSLFTEDIQLRASEGSSSSASSVGPSTNARVSDSFPASPHGLEDSPRSNFVRDHGDSVAHISNSNGELLPSVPPLNLGESHAMPIQEPYPKPRSQPGKRRRKSVHPDIVARAMVDTTIAIIPASAFRRLTRVYPRATAHIVQVILTRLQRVTFATAHSYLGLNNDVLGIEKQMTKFTTQDLPNEMRGAALDRLKDKFIKERDRLGPEEIIKGIALHNPFAGRRRRSSSFLRKEAVLHAKMAAQSKRPVSMASPEDISGDRESAGPSPGDLLSTIQLSRFGPRYEHLAPKLLSPLTDKENPPFMAPVMHSSPFHRKKDAVDEDALFRESILDCIMNGIGLTSSTRDVLRKSSHTSGDISPKLLSYDSRRQKAVFTNNAFGFIDPYDSSADGETESMMSMSMTSAGGTSPIVNLREELRNDIEIVYFPQGSVLVEQGERHPGLYYVIDGFLDVGIPVSDKGEDLVGGSRPVYGQPPEEFFPTLKRTTTSSSRVSGVTSATNDTKRKRQSRKSLYLIKPGGIQGYVGSVASYRSYTDVVAKTDVYVGFLPRSSLERIAERYPIALLTLAKRLTSLLPRLLLHIDFALEWVQVSAGQVIYHQGDESDAIYLVLNGRLRSVLEGTDGKITVVGEYGQGESVGELEVMTESTRPATLHAIRDTELAKFPRSLFNSLAQEHPGITIQVSKLIAQRMRDLVELPMPEKGGEHANVGSVKTAASVVNLRTVGILPVTAGVPVVEFGHRLQNALHQIGVTNGVTSLNQAAILNHLGRHAFSKMGKLKLSQYLADLEEKYGMVLYIADTNVNSPWTQTCITQADCILLVGLAESSPSIGEYERFLLGMKTTARKELVLLHSERYCPPGLTRQWLKNRMWINGGHHHIQMGFRLTPEPSHPQAKRLGAVLKQRVQVIQAEIQKYTSRRIRQTPLYSAQTPFKGDFHRLARRLCGRSVGLVLGGGGARGIAQVGVIKALEEAGIPIDIIGGTSIGSFIGALYARDADVVPMYGRAKKFAGRMASMWRFMLDLTYPTTSYTTGHEFNRGIFKTFGDSQIEDFWLEYYCNTTNISKSRPEFHSSGYTWRYVRASMSLAGLIPPICDEGSMLLDGGYIDNLTVTHMKGLGADVIFAVDVGSIDDNTPQGYGDSLSGFWTVLNRWNPFSACPNPPTLSEIQARLAYVSSIDNLERAKNTPGCLYMRPPIDPYGTLEFGKFDEIYQVGYAYGKQYLEKLRSEGSLPLPEETEEKKKLQRTLAPRRASI.

Over 1 to 74 (MATDGGPLAA…PPPTPSTMAG (74 aa)) the chain is Cytoplasmic. Residues 75-95 (WFGWVFSFFFQVIPSVLYWVI) form a helical membrane-spanning segment. Topologically, residues 96-117 (TFATITLPTWLFTLFSMSLTFT) are lumenal. Residues 118–138 (MNFTTLLLIALAIVSTISWFI) traverse the membrane as a helical segment. The Cytoplasmic portion of the chain corresponds to 139–1538 (RYRFLNMYSR…RTLAPRRASI (1400 aa)). Disordered regions lie at residues 242 to 264 (KPNV…DHRV), 302 to 393 (EGSS…KSVH), and 529 to 559 (AAQS…GDLL). Residues 302-314 (EGSSSSASSVGPS) show a composition bias toward low complexity. The segment covering 329 to 345 (GLEDSPRSNFVRDHGDS) has biased composition (basic and acidic residues). Residues 692 to 811 (GGTS…QGYV) and 856 to 976 (RLTS…IAQR) each bind a nucleoside 3',5'-cyclic phosphate. Residues 1235 to 1399 (LVLGGGGARG…IDNLTVTHMK (165 aa)) form the PNPLA domain. A GXGXXG motif is present at residues 1239 to 1244 (GGGARG). The GXSXG motif lies at 1266–1270 (GTSIG). The Nucleophile role is filled by S1268. Catalysis depends on D1386, which acts as the Proton acceptor. The DGA/G motif lies at 1386 to 1388 (DGG). The segment at 1517 to 1538 (LPEETEEKKKLQRTLAPRRASI) is disordered.

This sequence belongs to the NTE family.

The protein resides in the endoplasmic reticulum membrane. It carries out the reaction a 1-acyl-sn-glycero-3-phosphocholine + H2O = sn-glycerol 3-phosphocholine + a fatty acid + H(+). Its activity is regulated as follows. Inhibited by organophosphorus esters. Its function is as follows. Intracellular phospholipase B that catalyzes the double deacylation of phosphatidylcholine (PC) to glycerophosphocholine (GroPCho). Plays an important role in membrane lipid homeostasis. Responsible for the rapid PC turnover in response to inositol, elevated temperatures, or when choline is present in the growth medium. This chain is Lysophospholipase nte1 (nte1), found in Aspergillus oryzae (strain ATCC 42149 / RIB 40) (Yellow koji mold).